The sequence spans 1342 residues: DNA-directed RNA polymerase subunit beta (1342 aa).

It belongs to the RNA polymerase beta chain family. In terms of assembly, the RNAP catalytic core consists of 2 alpha, 1 beta, 1 beta' and 1 omega subunit. When a sigma factor is associated with the core the holoenzyme is formed, which can initiate transcription.

It carries out the reaction RNA(n) + a ribonucleoside 5'-triphosphate = RNA(n+1) + diphosphate. DNA-dependent RNA polymerase catalyzes the transcription of DNA into RNA using the four ribonucleoside triphosphates as substrates. This Histophilus somni (strain 129Pt) (Haemophilus somnus) protein is DNA-directed RNA polymerase subunit beta.